Consider the following 159-residue polypeptide: Phosphopantetheine adenylyltransferase (159 aa).

Ser9 provides a ligand contact to substrate. ATP-binding positions include 9–10 (SF) and His17. Substrate is bound by residues Lys41, Ile75, and Lys89. Residues 90-92 (GLR), Glu100, and 124-130 (LEHISSS) each bind ATP.

The protein belongs to the bacterial CoaD family. In terms of assembly, homohexamer. Mg(2+) is required as a cofactor.

Its subcellular location is the cytoplasm. It catalyses the reaction (R)-4'-phosphopantetheine + ATP + H(+) = 3'-dephospho-CoA + diphosphate. It functions in the pathway cofactor biosynthesis; coenzyme A biosynthesis; CoA from (R)-pantothenate: step 4/5. Its function is as follows. Reversibly transfers an adenylyl group from ATP to 4'-phosphopantetheine, yielding dephospho-CoA (dPCoA) and pyrophosphate. The protein is Phosphopantetheine adenylyltransferase of Bifidobacterium animalis subsp. lactis (strain AD011).